The primary structure comprises 488 residues: RuvB-like helicase 1 (488 aa).

The span at 1 to 11 (MATANTSSGSM) shows a compositional bias: polar residues. Residues 1–29 (MATANTSSGSMNGVGPVTMDSSTSGASRE) are disordered. Position 87–94 (87–94 (GGPGTGKT)) interacts with ATP.

This sequence belongs to the RuvB family. As to quaternary structure, may form heterododecamers with RVB2. Component of the SWR1 chromatin remodeling complex, the INO80 chromatin remodeling complex, and of the R2TP complex.

It localises to the nucleus. The enzyme catalyses ATP + H2O = ADP + phosphate + H(+). In terms of biological role, DNA helicase which participates in several chromatin remodeling complexes, including the SWR1 and the INO80 complexes. The SWR1 complex mediates the ATP-dependent exchange of histone H2A for the H2A variant HZT1 leading to transcriptional regulation of selected genes by chromatin remodeling. The INO80 complex remodels chromatin by shifting nucleosomes and is involved in DNA repair. Also involved in pre-rRNA processing. The polypeptide is RuvB-like helicase 1 (RVB1) (Mycosarcoma maydis (Corn smut fungus)).